The primary structure comprises 456 residues: Probable polygalacturonase At3g15720 (456 aa).

A signal peptide spans 1–23 (MKKKTWFLNFSLFFLQIFTSSNA). 6 PbH1 repeats span residues 169 to 195 (CNYVTISSLRINAPESSPNTDGIDVGA), 196 to 217 (SSNVVIQDCIIATGDDCIAINS), 219 to 239 (TSNIHISGIDCGPGHGISIGS), 249 to 270 (VENVCVQNCNFRGTMNGARIKT), 278 to 299 (ARMITFNGITLDNVENPIIIDQ), and 314 to 341 (SSAVEVSKVVFSNFIGTSKSEYGVDFRC). Asp210 (proton donor) is an active-site residue. His233 is a catalytic residue.

The protein belongs to the glycosyl hydrolase 28 family.

It is found in the secreted. Its subcellular location is the cell wall. The catalysed reaction is (1,4-alpha-D-galacturonosyl)n+m + H2O = (1,4-alpha-D-galacturonosyl)n + (1,4-alpha-D-galacturonosyl)m.. This chain is Probable polygalacturonase At3g15720, found in Arabidopsis thaliana (Mouse-ear cress).